Consider the following 167-residue polypeptide: Homeobox protein EgHBX3 (167 aa).

Positions 80-139 (SQSKRRVLFNKFQISQLEKRLKQRYLTAQERQELAHTIGLTPTQVKIWFQNHAYKMKRLF) form a DNA-binding region, homeobox.

Belongs to the NK-2 homeobox family.

It localises to the nucleus. The sequence is that of Homeobox protein EgHBX3 (HBX3) from Echinococcus granulosus (Hydatid tapeworm).